A 242-amino-acid polypeptide reads, in one-letter code: Type III pantothenate kinase (242 aa).

Asp7–Lys14 contributes to the ATP binding site. Substrate is bound by residues Tyr88 and Gly95–Arg98. Asp97 acts as the Proton acceptor in catalysis. Asp117 contacts K(+). Thr120 provides a ligand contact to ATP. Residue Thr172 coordinates substrate.

The protein belongs to the type III pantothenate kinase family. As to quaternary structure, homodimer. The cofactor is NH4(+). K(+) is required as a cofactor.

It is found in the cytoplasm. The enzyme catalyses (R)-pantothenate + ATP = (R)-4'-phosphopantothenate + ADP + H(+). The protein operates within cofactor biosynthesis; coenzyme A biosynthesis; CoA from (R)-pantothenate: step 1/5. Catalyzes the phosphorylation of pantothenate (Pan), the first step in CoA biosynthesis. The sequence is that of Type III pantothenate kinase from Akkermansia muciniphila (strain ATCC BAA-835 / DSM 22959 / JCM 33894 / BCRC 81048 / CCUG 64013 / CIP 107961 / Muc).